We begin with the raw amino-acid sequence, 685 residues long: Sorbicillinoid biosynthetic cluster transcription factor sor4 (685 aa).

Positions 1-14 (MGSSATATTTGEST) are enriched in low complexity. Residues 1-20 (MGSSATATTTGESTRQQPGL) form a disordered region. The segment at residues 22 to 49 (CEECRRRKARCDRVRPKCGICADSGRNC) is a DNA-binding region (zn(2)-C6 fungal-type). The disordered stretch occupies residues 81–112 (GQNDAPSLPQERDSLGCPTPSEKVSPEGDLVS).

The protein localises to the nucleus. Its function is as follows. Transcription factor that acts as the main regulator of the gene cluster that mediates the biosynthesis of sorbicillinoids, a diverse group of yellow secondary metabolites that restrict growth of competing pathogenic fungi but not of bacteria. This is Sorbicillinoid biosynthetic cluster transcription factor sor4 from Hypocrea jecorina (strain QM6a) (Trichoderma reesei).